The chain runs to 193 residues: Ion-translocating oxidoreductase complex subunit A (193 aa).

A run of 6 helical transmembrane segments spans residues 5–25 (LLLF…FLGL), 39–59 (IGMG…AWMV), 62–82 (FILL…LVIA), 102–122 (LLGI…VALL), 134–154 (AVYG…FAAI), and 171–191 (SIAL…TGLV).

Belongs to the NqrDE/RnfAE family. In terms of assembly, the complex is composed of six subunits: RnfA, RnfB, RnfC, RnfD, RnfE and RnfG.

The protein localises to the cell inner membrane. Part of a membrane-bound complex that couples electron transfer with translocation of ions across the membrane. The chain is Ion-translocating oxidoreductase complex subunit A from Yersinia pestis (strain Pestoides F).